The chain runs to 308 residues: UDP-N-acetylenolpyruvoylglucosamine reductase (308 aa).

The 165-residue stretch at 37 to 201 (RVGGPAQVLF…TQATFRGTPG (165 aa)) folds into the FAD-binding PCMH-type domain. Arg-181 is a catalytic residue. Residues 216–233 (SREATQPIKSRTGGSTFK) show a composition bias toward polar residues. The disordered stretch occupies residues 216–236 (SREATQPIKSRTGGSTFKNPP). The Proton donor role is filled by Ser-230. Glu-300 is a catalytic residue.

Belongs to the MurB family. Requires FAD as cofactor.

Its subcellular location is the cytoplasm. The enzyme catalyses UDP-N-acetyl-alpha-D-muramate + NADP(+) = UDP-N-acetyl-3-O-(1-carboxyvinyl)-alpha-D-glucosamine + NADPH + H(+). It participates in cell wall biogenesis; peptidoglycan biosynthesis. Cell wall formation. In Azorhizobium caulinodans (strain ATCC 43989 / DSM 5975 / JCM 20966 / LMG 6465 / NBRC 14845 / NCIMB 13405 / ORS 571), this protein is UDP-N-acetylenolpyruvoylglucosamine reductase.